The following is a 234-amino-acid chain: Ribosome maturation protein SDO1 homolog (234 aa).

Belongs to the SDO1/SBDS family.

The chain is Ribosome maturation protein SDO1 homolog from Archaeoglobus fulgidus (strain ATCC 49558 / DSM 4304 / JCM 9628 / NBRC 100126 / VC-16).